A 478-amino-acid chain; its full sequence is Nuclear distribution protein PAC1 (478 aa).

A LisH domain is found at 9–41 (QAEELHKAMIAYLLSANLPKSAAALREELADSV). Residues 60-87 (TSVVRLQKKIMDLESRNNALQSELDSAT) are a coiled coil. WD repeat units lie at residues 113 to 154 (SHRE…RTIK), 156 to 196 (HTKA…KNIR), 200 to 247 (GHDH…CVKT), 250 to 289 (GHVDWVRDVVASPDGRFLFSAGNDQVARLWDVSSGETKST), 292 to 352 (GHEH…IKTL), 354 to 393 (GHDNWVRALAFHPGGKYLLSVSDDKTLRCWDLTQECKCVR), 398 to 439 (AHGH…GASA), and 440 to 477 (INGVVPTGKKEDPGGGPMMGIRCVIATGSVDLKVRVFA).

This sequence belongs to the WD repeat LIS1/nudF family. In terms of assembly, self-associates. Interacts with NDL1 and dynein.

It localises to the cytoplasm. It is found in the cytoskeleton. Its subcellular location is the spindle pole. Positively regulates the activity of the minus-end directed microtubule motor protein dynein. May enhance dynein-mediated microtubule sliding by targeting dynein to the microtubule plus end. Required for nuclear migration during vegetative growth as well as development. Required for retrograde early endosome (EE) transport from the hyphal tip. Required for localization of dynein to the mitotic spindle poles. Recruits additional proteins to the dynein complex at SPBs. This Paracoccidioides brasiliensis (strain Pb03) protein is Nuclear distribution protein PAC1.